Here is a 100-residue protein sequence, read N- to C-terminus: Large ribosomal subunit protein uL23 (100 aa).

It belongs to the universal ribosomal protein uL23 family. Part of the 50S ribosomal subunit. Contacts protein L29, and trigger factor when it is bound to the ribosome.

Functionally, one of the early assembly proteins it binds 23S rRNA. One of the proteins that surrounds the polypeptide exit tunnel on the outside of the ribosome. Forms the main docking site for trigger factor binding to the ribosome. The polypeptide is Large ribosomal subunit protein uL23 (Acaryochloris marina (strain MBIC 11017)).